A 104-amino-acid polypeptide reads, in one-letter code: Holotricin-3 (104 aa).

An N-terminal signal peptide occupies residues 1–20 (MNKLIILGLACIIAVASAMP). The tract at residues 22-104 (GPGDGHGGGH…HHGGYQTHGY (83 aa)) is disordered. Gly residues predominate over residues 23–97 (PGDGHGGGHG…PGGHGGGHHG (75 aa)). Repeat copies occupy residues 27–30 (HGGG), 31–34 (HGGG), 35–38 (HGGG), 39–42 (HGNG), 43–46 (QGGG), 47–50 (HGHG), 51–54 (PGGG), 55–58 (FGGG), 59–62 (HGGG), 63–66 (HGGG), 67–70 (GRGG), 71–74 (GGSG), 75–78 (GGGS), 79–82 (PGHG), 83–86 (AGGG), 87–90 (YPGG), 91–94 (HGGG), and 96–98 (HGG). The tract at residues 27 to 98 (HGGGHGGGHG…GGHGGGHHGG (72 aa)) is 18 X 4 AA approximate tandem repeats of H-G-G-G.

It to T.molitor tenecin 3.

Its subcellular location is the secreted. Functionally, has antifungal activity against C.albicans. The chain is Holotricin-3 from Holotrichia diomphalia (Korean black chafer).